Reading from the N-terminus, the 169-residue chain is Caltractin (169 aa).

The tract at residues 1-24 (MSYRKTVVSARRDQKKGRVGGLTE) is disordered. 4 EF-hand domains span residues 25–60 (EQKQ…LGFE), 61–96 (PKKE…KMGE), 98–133 (DSRE…LGEN), and 134–169 (LTDE…TSLF). Residues aspartate 38, aspartate 40, serine 42, threonine 44, and glutamate 49 each contribute to the Ca(2+) site. The Ca(2+) site is built by aspartate 147, asparagine 149, aspartate 151, glutamine 153, and glutamate 158.

The protein belongs to the centrin family.

In terms of biological role, this calcium-binding protein is found in the basal body complexes (the functional homolog of the centrosome in animal cell). In mitotic cells it is specifically associated with the poles of the mitotic spindles at the sites of the duplicated basal body complexes. The sequence is that of Caltractin from Dunaliella salina (Green alga).